Here is a 247-residue protein sequence, read N- to C-terminus: 14-3-3 protein gamma-1 (247 aa).

It belongs to the 14-3-3 family. In terms of assembly, homodimer, and heterodimer with other family members.

The protein resides in the cytoplasm. Functionally, adapter protein implicated in the regulation of a large spectrum of both general and specialized signaling pathways. Binds to a large number of partners, usually by recognition of a phosphoserine or phosphothreonine motif. Binding generally results in the modulation of the activity of the binding partner. The protein is 14-3-3 protein gamma-1 (ywhag1) of Danio rerio (Zebrafish).